Here is a 397-residue protein sequence, read N- to C-terminus: uncharacterized protein (397 aa).

9 helical membrane-spanning segments follow: residues Met-1–Val-21, Val-39–Phe-59, Glu-76–Pro-96, Val-103–Ala-123, Ala-124–Ala-144, Met-194–Phe-214, Ala-219–Leu-239, Leu-255–Leu-275, and Gln-301–Ala-321.

This sequence belongs to the TerC family.

The protein resides in the cell membrane. This is an uncharacterized protein from Mycobacterium tuberculosis (strain CDC 1551 / Oshkosh).